A 457-amino-acid chain; its full sequence is MARRRRRACIALFLVLLFAFGTLMGLRTLKAPDGLPALGPGLELAPFERRPEGAPAPAARAPAAPAAPPPPPPPPRTADPGGSPGPAPAEAEPAPVQSLRVYSDLHAFYYSWYGSPRREGHYIHWDHVMVPHWDPKISASYPRGRHSPPDDLGSSFYPELGPYSSRDPEVLREHMTQLKEAAIGVLVLSWYPPGMADDNGEPSDDLVPAILDTAHQYSIQVAFHIQPYKGRDDITVHDNIKYIIDTYGSHGAFYRYKNSMGKSLPLFYIYDSYLTSPEAWAHLLTPNGPHSIRNTPYDGVFIALLVEEGHTHDILAAGFDGMYTYFASNGFSFGSSHQNWKAVKNFCDANNLMFIPSVGPGYIDTSIRPWNNHNTRNRVNGKYYETALQAALTVRPEIVSITSFNEWHEGTQIEKAIPKKTPTRLYLDYLPHQPSLYLELTRRWAEHFIKEKEQWLM.

Over M1–A8 the chain is Cytoplasmic. A helical; Signal-anchor for type II membrane protein membrane pass occupies residues C9–L29. The Lumenal segment spans residues K30–M457. The disordered stretch occupies residues P46–P93. The segment covering G53 to A64 has biased composition (low complexity). The segment covering P65 to A87 has biased composition (pro residues).

This sequence belongs to the glycosyl hydrolase 99 family.

It is found in the golgi apparatus membrane. This is Glycoprotein endo-alpha-1,2-mannosidase-like protein (MANEAL) from Homo sapiens (Human).